A 186-amino-acid polypeptide reads, in one-letter code: UPF0301 protein Nmul_A2478 (186 aa).

Belongs to the UPF0301 (AlgH) family.

In Nitrosospira multiformis (strain ATCC 25196 / NCIMB 11849 / C 71), this protein is UPF0301 protein Nmul_A2478.